Here is a 487-residue protein sequence, read N- to C-terminus: Argininosuccinate lyase (487 aa).

This sequence belongs to the lyase 1 family. Argininosuccinate lyase subfamily.

It is found in the cytoplasm. It catalyses the reaction 2-(N(omega)-L-arginino)succinate = fumarate + L-arginine. The protein operates within amino-acid biosynthesis; L-arginine biosynthesis; L-arginine from L-ornithine and carbamoyl phosphate: step 3/3. The protein is Argininosuccinate lyase of Natranaerobius thermophilus (strain ATCC BAA-1301 / DSM 18059 / JW/NM-WN-LF).